A 411-amino-acid chain; its full sequence is UPF0761 membrane protein PA14_51960 (411 aa).

The next 6 membrane-spanning stretches (helical) occupy residues 36–56 (LFAV…IPAF), 92–112 (HLTW…LVTI), 132–152 (FLLY…GFAV), 174–194 (LLGL…YSAV), 207–229 (GGVF…VSLF), and 244–264 (IFLL…VLVC).

It belongs to the UPF0761 family.

The protein localises to the cell inner membrane. This Pseudomonas aeruginosa (strain UCBPP-PA14) protein is UPF0761 membrane protein PA14_51960.